A 156-amino-acid chain; its full sequence is ATP synthase subunit b (156 aa).

The helical transmembrane segment at 7-29 (LLGQAIAFFFFVTFCMKYVWPPL) threads the bilayer.

The protein belongs to the ATPase B chain family. F-type ATPases have 2 components, F(1) - the catalytic core - and F(0) - the membrane proton channel. F(1) has five subunits: alpha(3), beta(3), gamma(1), delta(1), epsilon(1). F(0) has three main subunits: a(1), b(2) and c(10-14). The alpha and beta chains form an alternating ring which encloses part of the gamma chain. F(1) is attached to F(0) by a central stalk formed by the gamma and epsilon chains, while a peripheral stalk is formed by the delta and b chains.

It is found in the cell inner membrane. Functionally, f(1)F(0) ATP synthase produces ATP from ADP in the presence of a proton or sodium gradient. F-type ATPases consist of two structural domains, F(1) containing the extramembraneous catalytic core and F(0) containing the membrane proton channel, linked together by a central stalk and a peripheral stalk. During catalysis, ATP synthesis in the catalytic domain of F(1) is coupled via a rotary mechanism of the central stalk subunits to proton translocation. Its function is as follows. Component of the F(0) channel, it forms part of the peripheral stalk, linking F(1) to F(0). This chain is ATP synthase subunit b, found in Photobacterium profundum (strain SS9).